We begin with the raw amino-acid sequence, 63 residues long: Bowman-birk type proteinase inhibitor 2 (63 aa).

7 disulfide bridges follow: C7–C61, C8–C23, C11–C57, C13–C21, C31–C38, C35–C50, and C40–C48.

Belongs to the Bowman-Birk serine protease inhibitor family. Exists as a dimer in its native form.

Functionally, inhibits trypsin, chymotrypsin, plasmin and factor XIIa. Does not inhibit factor Xa, thrombin, human plasma kallikrein, porcine pancreatic kallikrein and human urinary kallikrein. This chain is Bowman-birk type proteinase inhibitor 2, found in Amburana cearensis (Cerejeira).